Consider the following 81-residue polypeptide: Large ribosomal subunit protein bL31B (81 aa).

This sequence belongs to the bacterial ribosomal protein bL31 family. Type B subfamily. Part of the 50S ribosomal subunit.

This Bacillus cereus (strain ATCC 10987 / NRS 248) protein is Large ribosomal subunit protein bL31B.